The following is a 259-amino-acid chain: uncharacterized protein (259 aa).

3 consecutive transmembrane segments (helical) span residues 55–75 (ILILVLFSGTFLLSSYFSYLI), 85–105 (FPSITISLSSLLPPLIIFFSS), and 127–147 (FFFAFAVFFAASIAFLDLCCG).

Its subcellular location is the membrane. This is an uncharacterized protein from Arabidopsis thaliana (Mouse-ear cress).